The sequence spans 333 residues: MTDSASGASAVANIATPSNEPYDATRKQKSLDKTARIPIKIVPAEKLKKPEWIRVKAATGNSRFYEIKDILRANNLVTVCEEASCPNIGECFGKGTATFMIMGDKCTRRCPFCDVGHGRPDPLDANEPENLAKTIAQLRLNYVVITSVDRDDLRDGGAQHYVDCISRTRELSPATRIEVLVPDFRGRLEKALDILQACPPDVMNHNMETVPRLYKQARPGADYAHSLKLLKDFKARNPNLPTKSGLMVGLGETDEEILEVMRDMREHDIDMLTIGQYLAPSGHHLPVLRYVHPDTFKMFEEKAYEMGFTHAAVGAMVRSSYHADQQAHEAGFA.

Residues 1–29 form a disordered region; it reads MTDSASGASAVANIATPSNEPYDATRKQK. The [4Fe-4S] cluster site is built by cysteine 80, cysteine 85, cysteine 91, cysteine 106, cysteine 110, cysteine 113, and serine 320. Positions 91-309 constitute a Radical SAM core domain; it reads CFGKGTATFM…EEKAYEMGFT (219 aa).

This sequence belongs to the radical SAM superfamily. Lipoyl synthase family. The cofactor is [4Fe-4S] cluster.

It localises to the cytoplasm. The catalysed reaction is [[Fe-S] cluster scaffold protein carrying a second [4Fe-4S](2+) cluster] + N(6)-octanoyl-L-lysyl-[protein] + 2 oxidized [2Fe-2S]-[ferredoxin] + 2 S-adenosyl-L-methionine + 4 H(+) = [[Fe-S] cluster scaffold protein] + N(6)-[(R)-dihydrolipoyl]-L-lysyl-[protein] + 4 Fe(3+) + 2 hydrogen sulfide + 2 5'-deoxyadenosine + 2 L-methionine + 2 reduced [2Fe-2S]-[ferredoxin]. The protein operates within protein modification; protein lipoylation via endogenous pathway; protein N(6)-(lipoyl)lysine from octanoyl-[acyl-carrier-protein]: step 2/2. Functionally, catalyzes the radical-mediated insertion of two sulfur atoms into the C-6 and C-8 positions of the octanoyl moiety bound to the lipoyl domains of lipoate-dependent enzymes, thereby converting the octanoylated domains into lipoylated derivatives. This chain is Lipoyl synthase, found in Ralstonia nicotianae (strain ATCC BAA-1114 / GMI1000) (Ralstonia solanacearum).